A 388-amino-acid polypeptide reads, in one-letter code: Chorismate synthase (388 aa).

NADP(+)-binding residues include arginine 39 and arginine 45. FMN-binding positions include 130 to 132, 251 to 252, glycine 296, 311 to 315, and arginine 337; these read RSS, NA, and KPIPT.

Belongs to the chorismate synthase family. In terms of assembly, homotetramer. The cofactor is FMNH2.

The catalysed reaction is 5-O-(1-carboxyvinyl)-3-phosphoshikimate = chorismate + phosphate. The protein operates within metabolic intermediate biosynthesis; chorismate biosynthesis; chorismate from D-erythrose 4-phosphate and phosphoenolpyruvate: step 7/7. Its function is as follows. Catalyzes the anti-1,4-elimination of the C-3 phosphate and the C-6 proR hydrogen from 5-enolpyruvylshikimate-3-phosphate (EPSP) to yield chorismate, which is the branch point compound that serves as the starting substrate for the three terminal pathways of aromatic amino acid biosynthesis. This reaction introduces a second double bond into the aromatic ring system. The sequence is that of Chorismate synthase from Streptococcus pyogenes serotype M49 (strain NZ131).